The chain runs to 135 residues: Large ribosomal subunit protein uL22c (135 aa).

It belongs to the universal ribosomal protein uL22 family. Part of the 50S ribosomal subunit.

It localises to the plastid. Its function is as follows. This protein binds specifically to 23S rRNA. Functionally, the globular domain of the protein is located near the polypeptide exit tunnel on the outside of the subunit, while an extended beta-hairpin is found that lines the wall of the exit tunnel in the center of the 70S ribosome. The protein is Large ribosomal subunit protein uL22c (rpl22) of Cuscuta reflexa (Southern Asian dodder).